The chain runs to 149 residues: Glutamate mutase sigma subunit (149 aa).

The region spanning 5 to 138 is the B12-binding domain; sequence DPTVVLGTIG…DAVKTELDVD (134 aa). Adenosylcob(III)alamin contacts are provided by residues 15-19, H18, 63-65, and 94-98; these read SDAHA, SSL, and NLAVG.

It belongs to the methylaspartate mutase GlmS subunit family. Heterotetramer composed of 2 epsilon subunits (GlmE) and 2 sigma subunits (GlmS). GlmE exists as a homodimer and GlmS as a monomer. It depends on adenosylcob(III)alamin as a cofactor.

The enzyme catalyses (2S,3S)-3-methyl-L-aspartate = L-glutamate. It participates in amino-acid degradation; L-glutamate degradation via mesaconate pathway; acetate and pyruvate from L-glutamate: step 1/4. In terms of biological role, catalyzes the carbon skeleton rearrangement of L-glutamate to L-threo-3-methylaspartate ((2S,3S)-3-methylaspartate). This is Glutamate mutase sigma subunit from Halobacterium salinarum (strain ATCC 700922 / JCM 11081 / NRC-1) (Halobacterium halobium).